Reading from the N-terminus, the 453-residue chain is Trigger factor (453 aa).

The PPIase FKBP-type domain maps to 171–256 (GDRVTISFKG…ASLIEAPQDI (86 aa)).

This sequence belongs to the FKBP-type PPIase family. Tig subfamily.

The protein resides in the cytoplasm. It catalyses the reaction [protein]-peptidylproline (omega=180) = [protein]-peptidylproline (omega=0). Involved in protein export. Acts as a chaperone by maintaining the newly synthesized protein in an open conformation. Functions as a peptidyl-prolyl cis-trans isomerase. This Nitrobacter hamburgensis (strain DSM 10229 / NCIMB 13809 / X14) protein is Trigger factor.